The following is an 874-amino-acid chain: Probable inorganic carbon transporter subunit DabA (874 aa).

Zn(2+) contacts are provided by C398, D400, H580, and C595.

Belongs to the inorganic carbon transporter (TC 9.A.2) DabA family. In terms of assembly, forms a complex with DabB. Zn(2+) is required as a cofactor.

It is found in the cell membrane. Functionally, part of an energy-coupled inorganic carbon pump. The polypeptide is Probable inorganic carbon transporter subunit DabA (Bacillus cereus (strain 03BB102)).